We begin with the raw amino-acid sequence, 55 residues long: Large ribosomal subunit protein bL32c (55 aa).

It belongs to the bacterial ribosomal protein bL32 family.

It is found in the plastid. Its subcellular location is the chloroplast. The chain is Large ribosomal subunit protein bL32c from Daucus carota (Wild carrot).